We begin with the raw amino-acid sequence, 1502 residues long: Heme-responsive zinc finger transcription factor HAP1 (1502 aa).

Residues 1–50 (MSNTPYNSSVPSIASMTQSSVSRSPNMHTATTPGANTSSNSPPLHMSSDS) show a composition bias toward polar residues. The disordered stretch occupies residues 1 to 56 (MSNTPYNSSVPSIASMTQSSVSRSPNMHTATTPGANTSSNSPPLHMSSDSSKIKRK). Zn(2+)-binding residues include C64, C67, C74, C81, C84, and C93. The segment at residues 64–93 (CTICRKRKVKCDKLRPHCQQCTKTGVAHLC) is a DNA-binding region (zn(2)-C6 fungal-type). Residues 105–134 (EKELLKDNELKKLRERVKSLEKTLSKVHSS) adopt a coiled-coil conformation. The segment at 126–208 (KTLSKVHSSP…ANSSSLSISN (83 aa)) is disordered. Positions 130–142 (KVHSSPSSNSLKS) are enriched in low complexity. Polar residues-rich tracts occupy residues 143–152 (YNTPESSNLF) and 160–176 (TLVN…SHMH). Over residues 177–208 (QQQQQQQQQEQQQDFSRSANANANSSSLSISN) the composition is skewed to low complexity. Positions 244–444 (KGDPYLKLLW…NTIPHHQPQS (201 aa)) are heme-responsive; required for HMC formation. HRM repeat units follow at residues 280–285 (KCPINH), 299–304 (KCPVDH), 323–328 (KCPVDH), 347–352 (RCPVDH), 389–394 (KCPVDH), and 415–420 (RCPIDH). 2 stretches are compositionally biased toward polar residues: residues 432–447 (STHN…SGSH) and 706–734 (QLNA…NPTL). Disordered regions lie at residues 432-458 (STHN…SRKH) and 706-767 (QLNA…KENQ). Low complexity predominate over residues 735–759 (NNNMSAATTNSSSRSGSADSRSGSN). The stretch at 1192–1197 (KCPVYQ) is one HRM 7 repeat. The segment at 1384–1411 (TANTDTSANGSALSTLTSPQGSDLASNS) is disordered. Over residues 1388–1411 (DTSANGSALSTLTSPQGSDLASNS) the composition is skewed to polar residues.

Binds DNA as a homodimer. Interacts with SRO9 and YDJ1. In the absence of heme, binds to at least four cellular proteins, including YDJ1 and SRO9, forming a high-molecular-weight complex (HMC) which results in repression of its activity and dictates its DNA-binding specificity.

The protein resides in the nucleus. In terms of biological role, regulation of oxygen dependent gene expression. It modulates the expression of Iso-1 (CYP1) and Iso-2 (CYP3) cytochrome c. In response to heme, promotes transcription of genes encoding functions required for respiration, controlling oxidative damage and repression of anaerobic genes. Binds to the sequence 5'-CGGNNNTNNCGG-3'. Is non-functional in terms of iso-1 cytochrome c expression in strain S288c and its derivatives. This Saccharomyces cerevisiae (strain ATCC 204508 / S288c) (Baker's yeast) protein is Heme-responsive zinc finger transcription factor HAP1 (HAP1).